Here is a 1165-residue protein sequence, read N- to C-terminus: Protein hsr-9 (1165 aa).

Disordered stretches follow at residues 1–26, 70–578, 608–713, and 874–913; these read MASSSNTMEFEEDDSTVTQTSLPTTT, AEDE…TEME, KYSM…IPLK, and TRARKPTTVSNQAKPKGRKKKGVDLVSSRGGSASPAEEEE. Over residues 16 to 26 the composition is skewed to low complexity; that stretch reads TVTQTSLPTTT. Basic and acidic residues-rich tracts occupy residues 98–114, 123–140, and 149–162; these read KDAKSGESMNDSEKSES, TFEKKIISMDTSDDKLDI, and DTEKPEENEEKVVG. Composition is skewed to acidic residues over residues 163 to 179, 211 to 230, and 280 to 289; these read DEDEEDIDDVQEDDEDE, EKEEPENEDDTEEPENEVEV, and GESEANEENQ. The segment covering 306 to 317 has biased composition (polar residues); the sequence is ATVSSTPSSNTP. Residues 397 to 408 are compositionally biased toward basic and acidic residues; it reads NTEHPTEEETPK. The segment covering 415-431 has biased composition (low complexity); sequence SAASSSATSSAVPTPRS. Residues 446–461 are compositionally biased toward basic and acidic residues; it reads LQEKETEDPTKTHDTN. Residues 533 to 543 show a composition bias toward acidic residues; sequence DPIEEADETIE. Over residues 554 to 563 the composition is skewed to low complexity; that stretch reads AAKSAPSSSK. Basic and acidic residues-rich tracts occupy residues 662 to 671 and 694 to 708; these read KKEEEHHEND and SEASDIKTPPAKKEP. Residues 923 to 1028 enclose the BRCT domain; that stretch reads IGKNIFTGKV…KCVDYTDYVL (106 aa).

In terms of tissue distribution, expressed in germ cells.

It is found in the nucleus. Its function is as follows. May have a role in DNA double-strand break repair following gamma-irradiation. The protein is Protein hsr-9 of Caenorhabditis elegans.